The sequence spans 102 residues: A-type ATP synthase subunit F (102 aa).

The protein belongs to the V-ATPase F subunit family. In terms of assembly, has multiple subunits with at least A(3), B(3), C, D, E, F, H, I and proteolipid K(x).

The protein resides in the cell membrane. Component of the A-type ATP synthase that produces ATP from ADP in the presence of a proton gradient across the membrane. The chain is A-type ATP synthase subunit F from Thermococcus sibiricus (strain DSM 12597 / MM 739).